A 370-amino-acid chain; its full sequence is Probable neutral protease 2 homolog TRV_02539 (370 aa).

An N-terminal signal peptide occupies residues 1 to 19 (MQLVAALAALGALVAPAVA). Residues 20–188 (YPHAPMNETL…SIHSRALQKR (169 aa)) constitute a propeptide that is removed on maturation. Intrachain disulfides connect Cys196–Cys267 and Cys274–Cys292. His316 lines the Zn(2+) pocket. The active site involves Glu317. Residues His320 and Asp331 each contribute to the Zn(2+) site.

Belongs to the peptidase M35 family. It depends on Zn(2+) as a cofactor.

It is found in the secreted. It catalyses the reaction Preferential cleavage of bonds with hydrophobic residues in P1'. Also 3-Asn-|-Gln-4 and 8-Gly-|-Ser-9 bonds in insulin B chain.. Functionally, probable secreted metalloprotease that shows high activities on basic nuclear substrates such as histone and protamine. May be involved in virulence. The chain is Probable neutral protease 2 homolog TRV_02539 from Trichophyton verrucosum (strain HKI 0517).